The sequence spans 123 residues: F-box protein PP2-B3 (123 aa).

Residues 10-56 (PSPFDGLPENCISNIISFTTPRDACFAASVSKAFESAVQSDSVWEKF) enclose the F-box domain.

This chain is F-box protein PP2-B3 (PP2B3), found in Arabidopsis thaliana (Mouse-ear cress).